Consider the following 158-residue polypeptide: Regulator of sigma D (158 aa).

The protein belongs to the Rsd/AlgQ family. In terms of assembly, interacts with RpoD.

It is found in the cytoplasm. Binds RpoD and negatively regulates RpoD-mediated transcription activation by preventing the interaction between the primary sigma factor RpoD with the catalytic core of the RNA polymerase and with promoter DNA. May be involved in replacement of the RNA polymerase sigma subunit from RpoD to RpoS during the transition from exponential growth to the stationary phase. In Shigella boydii serotype 4 (strain Sb227), this protein is Regulator of sigma D.